Consider the following 331-residue polypeptide: Homoserine O-succinyltransferase (331 aa).

The active-site Acyl-thioester intermediate is the C141. Substrate contacts are provided by K162 and S190. The Proton acceptor role is filled by H233. Residue E235 is part of the active site. Residue R247 participates in substrate binding.

It belongs to the MetA family.

The protein localises to the cytoplasm. The enzyme catalyses L-homoserine + succinyl-CoA = O-succinyl-L-homoserine + CoA. It participates in amino-acid biosynthesis; L-methionine biosynthesis via de novo pathway; O-succinyl-L-homoserine from L-homoserine: step 1/1. Transfers a succinyl group from succinyl-CoA to L-homoserine, forming succinyl-L-homoserine. This chain is Homoserine O-succinyltransferase, found in Methylorubrum extorquens (strain DSM 6343 / CIP 106787 / DM4) (Methylobacterium extorquens).